A 483-amino-acid chain; its full sequence is MLSANMLRRMHHGVAVTRMLLVSNGKVQVKKSALYPVMAKLARTYATKNYPAHTVINMPALSPTMTTGNIGAFQKKIGDKIEPGDVLCEIETDKAQIDFEQQDEGYLAKILIETGTKDVPVGKPLAVTVENEGDVAAMADFTIEDSSAKEPSAKSGEEKSAPSSEKQSKETSSPSNVSGEERGDRVFASPLARKLAEEKDLDLSQIRGSGPNGRIIKVDIENFKPVVAPKPSNEAAAKATTPAASAADAAAPGDYEDLPLSNMRKIIASRLAESKNMNPHYYVTVSVNMEKIIRLRAALNAMADGRYKLSVNDLVIKATTAALRQVPEVNAAWMGDFIRQYKNVDISMAVATPSGLITPVIRNTHALGLAEISTLAKDYGQRARNNKLKPEEYQGGTFTISNLGMFPVDQFTAIINPPQACILAVGTTVDTVVPDSTSEKGFKVAPIMKCTLSSDHRVVDGAMAARFTTALKKILENPLEIML.

A mitochondrion-targeting transit peptide spans 1–28; it reads MLSANMLRRMHHGVAVTRMLLVSNGKVQ. The Lipoyl-binding domain occupies 53 to 129; that stretch reads HTVINMPALS…PVGKPLAVTV (77 aa). Position 94 is an N6-lipoyllysine (K94). Disordered stretches follow at residues 143-187 and 234-254; these read IEDS…DRVF and EAAA…APGD. The span at 146 to 160 shows a compositional bias: basic and acidic residues; that stretch reads SSAKEPSAKSGEEKS. The segment covering 161-178 has biased composition (polar residues); that stretch reads APSSEKQSKETSSPSNVS. The Peripheral subunit-binding (PSBD) domain occupies 187-224; sequence FASPLARKLAEEKDLDLSQIRGSGPNGRIIKVDIENFK. Residues 235–252 are compositionally biased toward low complexity; sequence AAAKATTPAASAADAAAP. Residues H456 and D460 contribute to the active site.

The protein belongs to the 2-oxoacid dehydrogenase family. (R)-lipoate is required as a cofactor.

It localises to the mitochondrion matrix. It carries out the reaction N(6)-[(R)-dihydrolipoyl]-L-lysyl-[protein] + acetyl-CoA = N(6)-[(R)-S(8)-acetyldihydrolipoyl]-L-lysyl-[protein] + CoA. The pyruvate dehydrogenase complex catalyzes the overall conversion of pyruvate to acetyl-CoA and CO(2). It contains multiple copies of three enzymatic components: pyruvate dehydrogenase (E1), dihydrolipoamide acetyltransferase (E2) and lipoamide dehydrogenase (E3). The protein is Dihydrolipoyllysine-residue acetyltransferase component of pyruvate dehydrogenase complex, mitochondrial of Schizosaccharomyces pombe (strain 972 / ATCC 24843) (Fission yeast).